The sequence spans 121 residues: MAKLSAKDIIDSLKEMSMLEIKDLIEAIETEFGVSAAAPVAVAAAPAGGAAAPSEVTVTLKDVGGNKVAVIKVVREITGLGLMEAKALVDNAPSKVKEGVKLADAENMKKQFAEAGATVEW.

This sequence belongs to the bacterial ribosomal protein bL12 family. As to quaternary structure, homodimer. Part of the ribosomal stalk of the 50S ribosomal subunit. Forms a multimeric L10(L12)X complex, where L10 forms an elongated spine to which 2 to 4 L12 dimers bind in a sequential fashion. Binds GTP-bound translation factors.

In terms of biological role, forms part of the ribosomal stalk which helps the ribosome interact with GTP-bound translation factors. Is thus essential for accurate translation. This is Large ribosomal subunit protein bL12 from Malacoplasma penetrans (strain HF-2) (Mycoplasma penetrans).